A 1098-amino-acid chain; its full sequence is Gramicidin S synthase 1 (1098 aa).

In terms of domain architecture, Carrier spans 538-612 (APRNEIEETL…QLVHYIKDSK (75 aa)). S573 is subject to O-(pantetheine 4'-phosphoryl)serine.

The protein belongs to the ATP-dependent AMP-binding enzyme family. In terms of assembly, large multienzyme complex of GrsA and GrsB. Pantetheine 4'-phosphate serves as cofactor.

It carries out the reaction L-phenylalanine + ATP + H2O = D-phenylalanine + AMP + diphosphate + H(+). The protein operates within antibiotic biosynthesis; gramicidin S biosynthesis. In terms of biological role, in the first step of peptide synthesis this enzyme activates phenylalanine and racemizes it to the D-isomer. The chain is Gramicidin S synthase 1 (grsA) from Brevibacillus brevis (Bacillus brevis).